The sequence spans 337 residues: Vegetative-specific protein H5 (337 aa).

The Involved in the stabilization of the negatively charged intermediate by the formation of the oxyanion hole signature appears at 88 to 90; that stretch reads HGG. Residues serine 161, aspartate 261, and histidine 291 contribute to the active site.

Belongs to the 'GDXG' lipolytic enzyme family.

This is Vegetative-specific protein H5 (cinB) from Dictyostelium discoideum (Social amoeba).